We begin with the raw amino-acid sequence, 290 residues long: 4-hydroxy-tetrahydrodipicolinate synthase (290 aa).

A pyruvate-binding site is contributed by Thr-45. Tyr-133 acts as the Proton donor/acceptor in catalysis. The active-site Schiff-base intermediate with substrate is the Lys-161. Ile-202 provides a ligand contact to pyruvate.

Belongs to the DapA family. In terms of assembly, homotetramer; dimer of dimers.

It localises to the cytoplasm. It carries out the reaction L-aspartate 4-semialdehyde + pyruvate = (2S,4S)-4-hydroxy-2,3,4,5-tetrahydrodipicolinate + H2O + H(+). It participates in amino-acid biosynthesis; L-lysine biosynthesis via DAP pathway; (S)-tetrahydrodipicolinate from L-aspartate: step 3/4. Catalyzes the condensation of (S)-aspartate-beta-semialdehyde [(S)-ASA] and pyruvate to 4-hydroxy-tetrahydrodipicolinate (HTPA). This Alkalilimnicola ehrlichii (strain ATCC BAA-1101 / DSM 17681 / MLHE-1) protein is 4-hydroxy-tetrahydrodipicolinate synthase.